A 155-amino-acid chain; its full sequence is Effector protein PevD1 (155 aa).

The N-terminal stretch at 1–18 (MQFTLAAAAALFGASALA) is a signal peptide. Residues 33-148 (NMYENIDIAD…NPTTIVIDSL (116 aa)) form the AA1-like domain. Cystine bridges form between Cys70-Cys84 and Cys125-Cys135.

In terms of assembly, monomer. Interacts with Arabidopsis thaliana NRP.

It localises to the secreted. In terms of biological role, effector protein. Elicits a hypersensitive response (HR) in tobacco plants (N.tabacum) and cotton (G.hirsutum). Boosts systemic acquired resistance (SAR) to tobacco mosaic virus (TMV) infection in N.tabacum and to V.dhaliae infection in primed cotton seedlings. This Verticillium dahliae (Verticillium wilt) protein is Effector protein PevD1.